Here is a 456-residue protein sequence, read N- to C-terminus: ATP synthase subunit beta 1 (456 aa).

152 to 159 serves as a coordination point for ATP; it reads GGAGVGKS.

Belongs to the ATPase alpha/beta chains family. In terms of assembly, F-type ATPases have 2 components, CF(1) - the catalytic core - and CF(0) - the membrane proton channel. CF(1) has five subunits: alpha(3), beta(3), gamma(1), delta(1), epsilon(1). CF(0) has three main subunits: a(1), b(2) and c(9-12). The alpha and beta chains form an alternating ring which encloses part of the gamma chain. CF(1) is attached to CF(0) by a central stalk formed by the gamma and epsilon chains, while a peripheral stalk is formed by the delta and b chains.

The protein resides in the cell membrane. It catalyses the reaction ATP + H2O + 4 H(+)(in) = ADP + phosphate + 5 H(+)(out). In terms of biological role, produces ATP from ADP in the presence of a proton gradient across the membrane. The catalytic sites are hosted primarily by the beta subunits. In Listeria monocytogenes serovar 1/2a (strain ATCC BAA-679 / EGD-e), this protein is ATP synthase subunit beta 1.